Consider the following 686-residue polypeptide: Acyl-CoA synthetase short-chain family member 3, mitochondrial (686 aa).

A mitochondrion-targeting transit peptide spans 1–29 (MKPSWLQCRKVTSAGGLGGPLPGSSPARG). 227-230 (EPGR) is a binding site for CoA. Residues 425–427 (GER) and 446–451 (DHWWQT) each bind ATP. At Lys-518 the chain carries N6-succinyllysine. Position 524 is an N6-acetyllysine (Lys-524). Residues Asp-539, Arg-554, and Arg-565 each coordinate ATP. Arg-624 lines the CoA pocket.

It belongs to the ATP-dependent AMP-binding enzyme family.

It is found in the mitochondrion matrix. The catalysed reaction is acetate + ATP + CoA = acetyl-CoA + AMP + diphosphate. The enzyme catalyses propanoate + ATP + CoA = propanoyl-CoA + AMP + diphosphate. It carries out the reaction butanoate + ATP + CoA = butanoyl-CoA + AMP + diphosphate. Its function is as follows. Catalyzes the synthesis of acetyl-CoA from short-chain fatty acids. Propionate is the preferred substrate. Can utilize acetate and butyrate with a much lower affinity. The chain is Acyl-CoA synthetase short-chain family member 3, mitochondrial (ACSS3) from Homo sapiens (Human).